A 90-amino-acid polypeptide reads, in one-letter code: Small ribosomal subunit protein bS20 (90 aa).

It belongs to the bacterial ribosomal protein bS20 family.

Its function is as follows. Binds directly to 16S ribosomal RNA. The sequence is that of Small ribosomal subunit protein bS20 from Mesomycoplasma hyopneumoniae (strain J / ATCC 25934 / NCTC 10110) (Mycoplasma hyopneumoniae).